The primary structure comprises 38 residues: Large ribosomal subunit protein bL36 (38 aa).

Belongs to the bacterial ribosomal protein bL36 family.

The sequence is that of Large ribosomal subunit protein bL36 from Polynucleobacter necessarius subsp. necessarius (strain STIR1).